The primary structure comprises 230 residues: Ribosomal RNA small subunit methyltransferase G (230 aa).

S-adenosyl-L-methionine is bound by residues Gly91, Leu96, 142–143, and Arg161; that span reads VE.

The protein belongs to the methyltransferase superfamily. RNA methyltransferase RsmG family.

Its subcellular location is the cytoplasm. The catalysed reaction is guanosine(527) in 16S rRNA + S-adenosyl-L-methionine = N(7)-methylguanosine(527) in 16S rRNA + S-adenosyl-L-homocysteine. Functionally, specifically methylates the N7 position of guanine in position 527 of 16S rRNA. In Burkholderia pseudomallei (strain K96243), this protein is Ribosomal RNA small subunit methyltransferase G.